The primary structure comprises 286 residues: F-box/SPRY domain-containing protein 1 (286 aa).

At A2 the chain carries N-acetylalanine. One can recognise an F-box domain in the interval 33–82; sequence AGAGGRLPSRVLELVFSYLELSELRSCALVCKHWYRCLHGDENSEVWRSL. One can recognise a B30.2/SPRY domain in the interval 92 to 284; that stretch reads LRTDILCNLP…VTLVYLGKPL (193 aa).

Belongs to the FBXO45/Fsn family. In terms of assembly, forms a complex with MYCBP2 and SKP1. Interacts with HEY1; leading to FBXO45 nuclear translocation. Interacts (via SPRY domain) with CDH2.

It localises to the secreted. The protein localises to the postsynaptic cell membrane. Its subcellular location is the presynaptic cell membrane. It is found in the nucleus. The protein operates within protein modification; protein ubiquitination. In terms of biological role, component of E3 ubiquitin ligase complex consisting of FBXO45, MYCBP2 and SKP1. Functions in substrate recognition but also plays an important role in assembly of the complex. Required for normal neuromuscular synaptogenesis, axon pathfinding and neuronal migration. Regulates neuron migration during brain development through interaction with N-cadherin/CDH2 after secretion via a non-classical mechanism. Plays a role in the regulation of neurotransmission at mature neurons. May control synaptic activity by controlling UNC13A via ubiquitin dependent pathway. Specifically recognizes TP73, promoting its ubiquitination and degradation. Polyubiquitinates NMNAT2, an adenylyltransferase that acts as an axon maintenance factor, and regulates its stability and degradation by the proteasome. Also acts by ubiquitinating FBXW7 during prolonged mitotic arrest and promotes FBXW7 proteasomal degradation. Induces subsequently an increase in mitotic slippage and prevents mitotic cell death. In response to influenza infection, mediates interferon-lambda receptor IFNLR1 polyubiquitination and degradation through the ubiquitin-proteasome system by docking with its intracellular receptor domain. In Homo sapiens (Human), this protein is F-box/SPRY domain-containing protein 1 (FBXO45).